The sequence spans 147 residues: uncharacterized protein (147 aa).

The next 2 helical transmembrane spans lie at 35 to 55 (TIQL…FGNH) and 62 to 82 (IWLL…LFEP).

As to quaternary structure, has been detected in a cytochrome bc1-aa3 supercomplex; its deletion however leaves complex activity unaffected.

The protein resides in the cell membrane. This is an uncharacterized protein from Corynebacterium glutamicum (strain ATCC 13032 / DSM 20300 / JCM 1318 / BCRC 11384 / CCUG 27702 / LMG 3730 / NBRC 12168 / NCIMB 10025 / NRRL B-2784 / 534).